The chain runs to 629 residues: Filament-like plant protein 2 (629 aa).

Coiled-coil stretches lie at residues 34–61 (WEKA…LEDR) and 102–171 (NTGL…LEAE). Residues 186–205 (SSNQSVDSHSDGGRERVEGS) are disordered. Residues 193–203 (SHSDGGRERVE) are compositionally biased toward basic and acidic residues. A coiled-coil region spans residues 270–493 (ELSLMEKLEK…IEEKTMIKRE (224 aa)).

This sequence belongs to the FPP family. Interacts with WPP/MAF proteins. Binds to COG2; this interaction promotes the association between cortical microtubules and EXO70A1. In terms of tissue distribution, accumulates in preferentially xylem cells.

The protein resides in the vesicle. In terms of biological role, ensures, when in complex with FPP3/VETH1 and COG2, the correct secondary cell wall (SCW) deposition pattern by recruiting exocyst components to cortical microtubules in xylem cells during secondary cell wall deposition by recruiting EXO70A1. The chain is Filament-like plant protein 2 from Arabidopsis thaliana (Mouse-ear cress).